Reading from the N-terminus, the 135-residue chain is Phosphoribosyl-AMP cyclohydrolase (135 aa).

Aspartate 89 is a Mg(2+) binding site. A Zn(2+)-binding site is contributed by cysteine 90. Positions 91 and 93 each coordinate Mg(2+). Residues cysteine 106 and cysteine 113 each coordinate Zn(2+).

The protein belongs to the PRA-CH family. Homodimer. Mg(2+) is required as a cofactor. Requires Zn(2+) as cofactor.

The protein resides in the cytoplasm. The enzyme catalyses 1-(5-phospho-beta-D-ribosyl)-5'-AMP + H2O = 1-(5-phospho-beta-D-ribosyl)-5-[(5-phospho-beta-D-ribosylamino)methylideneamino]imidazole-4-carboxamide. The protein operates within amino-acid biosynthesis; L-histidine biosynthesis; L-histidine from 5-phospho-alpha-D-ribose 1-diphosphate: step 3/9. In terms of biological role, catalyzes the hydrolysis of the adenine ring of phosphoribosyl-AMP. The sequence is that of Phosphoribosyl-AMP cyclohydrolase from Bifidobacterium adolescentis (strain ATCC 15703 / DSM 20083 / NCTC 11814 / E194a).